A 505-amino-acid chain; its full sequence is MHELIREAVDNPGTAWEIIKMDRDVTEVVDAVSDLSREDKIKLGATFKRFPLGCDLTELIVGTCASDLEKIDLMGNCMLSDTIGATIHVCAYAFADIAESYGMRPVELMREVRETTEVPLDLDHFGRYGPMRFPRSITGCGGQCYLEGPPFEGCPRERIHARLLDREKEGLSDREEWVELSSSVAVNLTPVQGAETHAAPLEEAEEVLELARKHGKGVEAIMFVGDGYDDLISGFEAGLEMGVDVFVLEGGPFNLAGDRLDAFAGAVAAARILTPGKIVATNGAYEDECRIGLRAGLNAIITGFPKNHHGYMCGYTPGTARRGKFGLPRVMKIMREEVESGLTPVPIQKAQLEALAAAVKVSGTENVYPRTLGYTYVGDAHWACLPSTPLYERVEVKRDVNALVKMAEDGDIHGRVAIFGARFVSWVIADKLDGLVDEFVIVDRDPWVEQVTVDNLRSELRTDVHPGNSDDEGAYSSADSSIVSTTIPQISAKISGKFRDTVTLV.

The interval 461 to 480 is disordered; the sequence is RTDVHPGNSDDEGAYSSADS.

The protein to M.jannaschii MJ0787.

This is an uncharacterized protein from Methanothermobacter thermautotrophicus (strain ATCC 29096 / DSM 1053 / JCM 10044 / NBRC 100330 / Delta H) (Methanobacterium thermoautotrophicum).